The primary structure comprises 373 residues: MKPHFRNTVERMYRDTFSYNFYNRPILSRRNTVWLCYEVKTKGPSRPRLDAKIFRGQVYSQPEHHAEMCFLSWFCGNQLPAYKCFQITWFVSWTPCPDCVAKLAEFLAEHPNVTLTISAARLYYYWERDYRRALCRLSQAGARVKIMDDEEFAYCWENFVYSEGQPFMPWYKFDDNYAFLHRTLKEILRNPMEAMYPHIFYFHFKNLRKAYGRNESWLCFTMEVVKHHSPVSWKRGVFRNQVDPETHCHAERCFLSWFCDDILSPNTNYEVTWYTSWSPCPECAGEVAEFLARHSNVNLTIFTARLYYFWDTDYQEGLRSLSQEGASVEIMGYKDFKYCWENFVYNDDEPFKPWKGLKYNFLFLDSKLQEILE.

2 consecutive CMP/dCMP-type deaminase domains span residues 29 to 137 (RRNT…LCRL) and 174 to 321 (DDNY…LRSL). A (Microbial infection) Glycyl lysine isopeptide (Lys-Gly) (interchain with G-Cter in ubiquitin) cross-link involves residue Lys-52. Zn(2+)-binding residues include His-65, Cys-96, and Cys-99. A (Microbial infection) Glycyl lysine isopeptide (Lys-Gly) (interchain with G-Cter in ubiquitin) cross-link involves residue Lys-234. Residue His-249 participates in Zn(2+) binding. Catalysis depends on Glu-251, which acts as the Proton donor. Cys-280 and Cys-283 together coordinate Zn(2+). An intrachain disulfide couples Cys-280 to Cys-283. Residues Lys-334, Lys-352, Lys-355, and Lys-358 each participate in a (Microbial infection) Glycyl lysine isopeptide (Lys-Gly) (interchain with G-Cter in ubiquitin) cross-link.

The protein belongs to the cytidine and deoxycytidylate deaminase family. Homodimer. Interacts with APOBEC3G in an RNA-dependent manner. Interacts with AGO1, AGO2 and AGO3. As to quaternary structure, (Microbial infection) Interacts with HIV-1 Vif, leading to its ubiquitination and degradation by the proteasome. In the absence of Vif protein, specifically packaged into HIV-1 virions. Zn(2+) serves as cofactor. (Microbial infection) Following infection by HIV-1, ubiquitinated by a cullin-5-RING E3 ubiquitin-protein ligase complex (ECS complex) hijacked by the HIV-1 Vif protein, leading to its degradation. As to expression, widely expressed. Highly expressed in ovary.

It localises to the cytoplasm. It is found in the P-body. The catalysed reaction is a 2'-deoxycytidine in single-stranded DNA + H2O + H(+) = a 2'-deoxyuridine in single-stranded DNA + NH4(+). (Microbial infection) Antiviral activity is neutralized by the HIV-1 virion infectivity factor (Vif), that prevents its incorporation into progeny virions by both inhibiting its translation and/or by inducing its ubiquitination and subsequent degradation by the 26S proteasome. Its function is as follows. DNA deaminase (cytidine deaminase) which acts as an inhibitor of retrovirus replication and retrotransposon mobility via deaminase-dependent and -independent mechanisms. Exhibits antiviral activity against viruse such as HIV-1 or HIV-2. After the penetration of retroviral nucleocapsids into target cells of infection and the initiation of reverse transcription, it can induce the conversion of cytosine to uracil in the minus-sense single-strand viral DNA, leading to G-to-A hypermutations in the subsequent plus-strand viral DNA. The resultant detrimental levels of mutations in the proviral genome, along with a deamination-independent mechanism that works prior to the proviral integration, together exert efficient antiretroviral effects in infected target cells. Selectively targets single-stranded DNA and does not deaminate double-stranded DNA or single- or double-stranded RNA. Exhibits antiviral activity also against hepatitis B virus (HBV), equine infectious anemia virus (EIAV), xenotropic MuLV-related virus (XMRV) and simian foamy virus (SFV) and may inhibit the mobility of LTR and non-LTR retrotransposons. May also play a role in the epigenetic regulation of gene expression through the process of active DNA demethylation. This is DNA dC-&gt;dU-editing enzyme APOBEC-3F from Homo sapiens (Human).